Consider the following 299-residue polypeptide: ATP phosphoribosyltransferase (299 aa).

Belongs to the ATP phosphoribosyltransferase family. Long subfamily. In terms of assembly, equilibrium between an active dimeric form, an inactive hexameric form and higher aggregates. Interconversion between the various forms is largely reversible and is influenced by the natural substrates and inhibitors of the enzyme. Requires Mg(2+) as cofactor.

The protein resides in the cytoplasm. The enzyme catalyses 1-(5-phospho-beta-D-ribosyl)-ATP + diphosphate = 5-phospho-alpha-D-ribose 1-diphosphate + ATP. The protein operates within amino-acid biosynthesis; L-histidine biosynthesis; L-histidine from 5-phospho-alpha-D-ribose 1-diphosphate: step 1/9. Feedback inhibited by histidine. Its function is as follows. Catalyzes the condensation of ATP and 5-phosphoribose 1-diphosphate to form N'-(5'-phosphoribosyl)-ATP (PR-ATP). Has a crucial role in the pathway because the rate of histidine biosynthesis seems to be controlled primarily by regulation of HisG enzymatic activity. This chain is ATP phosphoribosyltransferase, found in Buchnera aphidicola subsp. Melaphis rhois.